The chain runs to 525 residues: GMP synthase [glutamine-hydrolyzing] (525 aa).

The region spanning arginine 9–leucine 207 is the Glutamine amidotransferase type-1 domain. Cysteine 86 functions as the Nucleophile in the catalytic mechanism. Residues histidine 181 and glutamate 183 contribute to the active site. The region spanning tryptophan 208–arginine 400 is the GMPS ATP-PPase domain. Serine 235–serine 241 contacts ATP.

In terms of assembly, homodimer.

The enzyme catalyses XMP + L-glutamine + ATP + H2O = GMP + L-glutamate + AMP + diphosphate + 2 H(+). Its pathway is purine metabolism; GMP biosynthesis; GMP from XMP (L-Gln route): step 1/1. Catalyzes the synthesis of GMP from XMP. The sequence is that of GMP synthase [glutamine-hydrolyzing] from Escherichia coli O17:K52:H18 (strain UMN026 / ExPEC).